The chain runs to 596 residues: Aspartate--tRNA(Asp/Asn) ligase (596 aa).

Glu182 contacts L-aspartate. Residues 206–209 (QLFK) form an aspartate region. Residue Arg228 coordinates L-aspartate. ATP-binding positions include 228 to 230 (RDE) and Gln237. L-aspartate is bound at residue His456. An ATP-binding site is contributed by Glu490. An L-aspartate-binding site is contributed by Arg497. 542–545 (GLDR) contributes to the ATP binding site.

The protein belongs to the class-II aminoacyl-tRNA synthetase family. Type 1 subfamily. As to quaternary structure, homodimer.

The protein localises to the cytoplasm. It catalyses the reaction tRNA(Asx) + L-aspartate + ATP = L-aspartyl-tRNA(Asx) + AMP + diphosphate. Aspartyl-tRNA synthetase with relaxed tRNA specificity since it is able to aspartylate not only its cognate tRNA(Asp) but also tRNA(Asn). Reaction proceeds in two steps: L-aspartate is first activated by ATP to form Asp-AMP and then transferred to the acceptor end of tRNA(Asp/Asn). The protein is Aspartate--tRNA(Asp/Asn) ligase of Syntrophotalea carbinolica (strain DSM 2380 / NBRC 103641 / GraBd1) (Pelobacter carbinolicus).